The primary structure comprises 60 residues: Large ribosomal subunit protein uL30 (60 aa).

It belongs to the universal ribosomal protein uL30 family. In terms of assembly, part of the 50S ribosomal subunit.

The polypeptide is Large ribosomal subunit protein uL30 (Moorella thermoacetica (strain ATCC 39073 / JCM 9320)).